The sequence spans 143 residues: Transcriptional regulator MraZ (143 aa).

2 consecutive SpoVT-AbrB domains span residues 5–47 (EYEH…PMPV) and 76–119 (ASDL…SAER).

It belongs to the MraZ family. Forms oligomers.

The protein resides in the cytoplasm. It is found in the nucleoid. In Herpetosiphon aurantiacus (strain ATCC 23779 / DSM 785 / 114-95), this protein is Transcriptional regulator MraZ.